The sequence spans 158 residues: SsrA-binding protein (158 aa).

This sequence belongs to the SmpB family.

It localises to the cytoplasm. In terms of biological role, required for rescue of stalled ribosomes mediated by trans-translation. Binds to transfer-messenger RNA (tmRNA), required for stable association of tmRNA with ribosomes. tmRNA and SmpB together mimic tRNA shape, replacing the anticodon stem-loop with SmpB. tmRNA is encoded by the ssrA gene; the 2 termini fold to resemble tRNA(Ala) and it encodes a 'tag peptide', a short internal open reading frame. During trans-translation Ala-aminoacylated tmRNA acts like a tRNA, entering the A-site of stalled ribosomes, displacing the stalled mRNA. The ribosome then switches to translate the ORF on the tmRNA; the nascent peptide is terminated with the 'tag peptide' encoded by the tmRNA and targeted for degradation. The ribosome is freed to recommence translation, which seems to be the essential function of trans-translation. This chain is SsrA-binding protein, found in Roseiflexus castenholzii (strain DSM 13941 / HLO8).